We begin with the raw amino-acid sequence, 956 residues long: Valine--tRNA ligase (956 aa).

Residues 43-53 (PNITGNLHIGH) carry the 'HIGH' region motif. The 'KMSKS' region motif lies at 556–560 (KMSKS). Residue K559 participates in ATP binding. Residues 889-920 (PKEKELKNLNKEISKIQLAINKLQQRLSNEEF) adopt a coiled-coil conformation.

It belongs to the class-I aminoacyl-tRNA synthetase family. ValS type 1 subfamily. In terms of assembly, monomer.

It localises to the cytoplasm. It catalyses the reaction tRNA(Val) + L-valine + ATP = L-valyl-tRNA(Val) + AMP + diphosphate. In terms of biological role, catalyzes the attachment of valine to tRNA(Val). As ValRS can inadvertently accommodate and process structurally similar amino acids such as threonine, to avoid such errors, it has a 'posttransfer' editing activity that hydrolyzes mischarged Thr-tRNA(Val) in a tRNA-dependent manner. The protein is Valine--tRNA ligase of Buchnera aphidicola subsp. Baizongia pistaciae (strain Bp).